A 66-amino-acid polypeptide reads, in one-letter code: Large ribosomal subunit protein bL35 (66 aa).

2 stretches are compositionally biased toward basic residues: residues 1–16 and 23–45; these read MPKFKTHRASAKRFKK and KRGHAYTSHRFHGKTKKQRRQLR. The tract at residues 1–66 is disordered; sequence MPKFKTHRAS…RIRQMLSQMK (66 aa).

Belongs to the bacterial ribosomal protein bL35 family.

The sequence is that of Large ribosomal subunit protein bL35 from Lacticaseibacillus casei (strain BL23) (Lactobacillus casei).